The primary structure comprises 80 residues: Exodeoxyribonuclease 7 small subunit (80 aa).

Belongs to the XseB family. Heterooligomer composed of large and small subunits.

The protein resides in the cytoplasm. The catalysed reaction is Exonucleolytic cleavage in either 5'- to 3'- or 3'- to 5'-direction to yield nucleoside 5'-phosphates.. Bidirectionally degrades single-stranded DNA into large acid-insoluble oligonucleotides, which are then degraded further into small acid-soluble oligonucleotides. The protein is Exodeoxyribonuclease 7 small subunit of Edwardsiella ictaluri (strain 93-146).